Reading from the N-terminus, the 337-residue chain is Ribosomal RNA small subunit methyltransferase C (337 aa).

Belongs to the methyltransferase superfamily. RsmC family. As to quaternary structure, monomer.

Its subcellular location is the cytoplasm. The catalysed reaction is guanosine(1207) in 16S rRNA + S-adenosyl-L-methionine = N(2)-methylguanosine(1207) in 16S rRNA + S-adenosyl-L-homocysteine + H(+). Specifically methylates the guanine in position 1207 of 16S rRNA in the 30S particle. The sequence is that of Ribosomal RNA small subunit methyltransferase C from Acinetobacter baumannii (strain ACICU).